We begin with the raw amino-acid sequence, 494 residues long: Ribose import ATP-binding protein RbsA (494 aa).

ABC transporter domains are found at residues 3–240 and 250–494; these read IEMK…VGRS and SQIS…TGGE. 35–42 contacts ATP; it reads GENGAGKS.

Belongs to the ABC transporter superfamily. Ribose importer (TC 3.A.1.2.1) family. In terms of assembly, the complex is composed of an ATP-binding protein (RbsA), two transmembrane proteins (RbsC) and a solute-binding protein (RbsB).

The protein resides in the cell membrane. The catalysed reaction is D-ribose(out) + ATP + H2O = D-ribose(in) + ADP + phosphate + H(+). Functionally, part of the ABC transporter complex RbsABC involved in ribose import. Responsible for energy coupling to the transport system. This chain is Ribose import ATP-binding protein RbsA, found in Bacillus cereus (strain ZK / E33L).